The sequence spans 361 residues: Hydroxyproline O-arabinosyltransferase PLENTY (361 aa).

Residues 13-33 (LLMLLMVLGFFFATYNLVSMI) traverse the membrane as a helical; Signal-anchor segment.

Its subcellular location is the golgi apparatus membrane. The enzyme catalyses trans-4-hydroxy-L-prolyl-[protein] + UDP-beta-L-arabinofuranose = O-(beta-L-arabinofuranosyl)-trans-4-hydroxy-L-prolyl-[protein] + UDP + H(+). In terms of biological role, glycosyltransferase involved in the O-arabinosylation of several proteins including extensins and small signaling peptides. Catalyzes the transfer of the initial L-arabinose to the hydroxyl group of Hyp residues. Probably involved in the arabinosylation of CLAVATA3/ESR-related (CLE) signaling peptides that move from root to shoot, to interact with receptor kinase signaling that regulates nodulation. Involved in long distance nodulation signaling events. Involved in the autoregulation of nodulation (AON), a long distance systemic signaling from root to shoot and back again, which allows legumes to limit the number of root nodules formed based on available nitrogen and previous rhizobial colonization. This Lotus japonicus (Lotus corniculatus var. japonicus) protein is Hydroxyproline O-arabinosyltransferase PLENTY.